Consider the following 382-residue polypeptide: Intermediate transcription factor 3 large subunit (382 aa).

The protein belongs to the poxviruses A23 family. In terms of assembly, heterodimer of a 45 kDa and a 32 kDa subunit.

Acts with RNA polymerase to initiate transcription from intermediate gene promoters. The chain is Intermediate transcription factor 3 large subunit (VITF3L) from Monkeypox virus (strain Zaire-96-I-16) (MPX).